A 332-amino-acid chain; its full sequence is Putative peptide import ATP-binding protein BMEII0206 (332 aa).

One can recognise an ABC transporter domain in the interval Leu11–Leu261. ATP is bound at residue Gly47 to Ser54.

This sequence belongs to the ABC transporter superfamily. As to quaternary structure, the complex is composed of two ATP-binding proteins (BMEII0205 and BMEII0206), two transmembrane proteins (BMEII0207/BMEII0208 and BMEII0209) and a solute-binding protein (BMEII0210).

The protein localises to the cell inner membrane. Functionally, probably part of an ABC transporter complex that could be involved in peptide import. Probably responsible for energy coupling to the transport system. In Brucella melitensis biotype 1 (strain ATCC 23456 / CCUG 17765 / NCTC 10094 / 16M), this protein is Putative peptide import ATP-binding protein BMEII0206.